A 195-amino-acid chain; its full sequence is Large ribosomal subunit protein uL5 (195 aa).

It belongs to the universal ribosomal protein uL5 family. As to quaternary structure, part of the 50S ribosomal subunit; part of the 5S rRNA/L5/L18/L25 subcomplex. Contacts the 5S rRNA and the P site tRNA. Forms a bridge to the 30S subunit in the 70S ribosome.

Its function is as follows. This is one of the proteins that bind and probably mediate the attachment of the 5S RNA into the large ribosomal subunit, where it forms part of the central protuberance. In the 70S ribosome it contacts protein S13 of the 30S subunit (bridge B1b), connecting the 2 subunits; this bridge is implicated in subunit movement. Contacts the P site tRNA; the 5S rRNA and some of its associated proteins might help stabilize positioning of ribosome-bound tRNAs. This chain is Large ribosomal subunit protein uL5, found in Leifsonia xyli subsp. xyli (strain CTCB07).